The primary structure comprises 1362 residues: DNA-directed RNA polymerase subunit beta (1362 aa).

Belongs to the RNA polymerase beta chain family. As to quaternary structure, the RNAP catalytic core consists of 2 alpha, 1 beta, 1 beta' and 1 omega subunit. When a sigma factor is associated with the core the holoenzyme is formed, which can initiate transcription.

It carries out the reaction RNA(n) + a ribonucleoside 5'-triphosphate = RNA(n+1) + diphosphate. Functionally, DNA-dependent RNA polymerase catalyzes the transcription of DNA into RNA using the four ribonucleoside triphosphates as substrates. This is DNA-directed RNA polymerase subunit beta from Acidithiobacillus ferrooxidans (strain ATCC 23270 / DSM 14882 / CIP 104768 / NCIMB 8455) (Ferrobacillus ferrooxidans (strain ATCC 23270)).